The sequence spans 144 residues: Transcription antitermination protein NusB (144 aa).

It belongs to the NusB family.

In terms of biological role, involved in transcription antitermination. Required for transcription of ribosomal RNA (rRNA) genes. Binds specifically to the boxA antiterminator sequence of the ribosomal RNA (rrn) operons. The polypeptide is Transcription antitermination protein NusB (Dictyoglomus turgidum (strain DSM 6724 / Z-1310)).